We begin with the raw amino-acid sequence, 205 residues long: Outer-membrane lipoprotein carrier protein (205 aa).

The N-terminal stretch at 1 to 19 (MKKIIICFIFVFSINVSFA) is a signal peptide.

The protein belongs to the LolA family. In terms of assembly, monomer.

The protein localises to the periplasm. Its function is as follows. Participates in the translocation of lipoproteins from the inner membrane to the outer membrane. Only forms a complex with a lipoprotein if the residue after the N-terminal Cys is not an aspartate (The Asp acts as a targeting signal to indicate that the lipoprotein should stay in the inner membrane). The sequence is that of Outer-membrane lipoprotein carrier protein from Francisella tularensis subsp. tularensis (strain FSC 198).